A 70-amino-acid chain; its full sequence is Small ribosomal subunit protein bS21 (70 aa).

The protein belongs to the bacterial ribosomal protein bS21 family.

The sequence is that of Small ribosomal subunit protein bS21 from Nitrosomonas eutropha (strain DSM 101675 / C91 / Nm57).